The following is a 295-amino-acid chain: Aquaporin-9 (295 aa).

At 1-24 the chain is on the cytoplasmic side; it reads MPSEKDGAKKSLMQRLALKSRIAK. Residues 25–43 traverse the membrane as a helical segment; it reads ETLSEFLGTFIMIVLGCSS. Residues 44–57 are Extracellular-facing; that stretch reads IAQAVLSRERFGGI. A helical transmembrane segment spans residues 58–77; that stretch reads ITINIGFASAVVMALYVTFG. The Cytoplasmic segment spans residues 78–79; that stretch reads IS. An intramembrane region (discontinuously helical) is located at residues 80–92; that stretch reads GGHINPAVSFAMC. The NPA 1 motif lies at 84 to 86; that stretch reads NPA. At 93 to 98 the chain is on the cytoplasmic side; sequence AFGRME. A helical membrane pass occupies residues 99 to 123; that stretch reads WFKFPFYVGAQFLGAFVGAATVFGI. Topologically, residues 124-160 are extracellular; it reads YYDGLMAFAGGKLLVVGENATAFIFATYPAPFISTPG. The helical transmembrane segment at 161 to 178 threads the bilayer; sequence AFVDQVVSTMFLLLIVFA. Residues 179-190 are Cytoplasmic-facing; sequence MFDSRNLGVPRG. Residues 191–207 form a helical membrane-spanning segment; sequence LEPVVIGLLIIVLSCSL. At 208-210 the chain is on the extracellular side; the sequence is GLN. An intramembrane region (discontinuously helical) is located at residues 211 to 225; the sequence is SGCAMNPARDLSPRL. The NPA 2 motif lies at 216 to 218; that stretch reads NPA. Residues 226-243 lie on the Extracellular side of the membrane; the sequence is FTALAGWGFEVFTVGNNF. A helical transmembrane segment spans residues 244 to 264; the sequence is WWIPVVGPMIGAFLGGLIYIL. Residues 265-295 lie on the Cytoplasmic side of the membrane; the sequence is FIQMHHSKLDPDMKAEPSENNLEKHELSVIM.

Belongs to the MIP/aquaporin (TC 1.A.8) family. Homotetramer; each monomer provides an independent glycerol/water pore. As to expression, detected in testis and liver. Detected in immature spermatocytes and in interstitial Leydig cells.

The protein localises to the cell membrane. It localises to the basolateral cell membrane. It carries out the reaction H2O(in) = H2O(out). The catalysed reaction is glycerol(in) = glycerol(out). The enzyme catalyses urea(in) = urea(out). It catalyses the reaction (S)-lactate(in) = (S)-lactate(out). It carries out the reaction NH4(+)(in) = NH4(+)(out). The catalysed reaction is uracil(in) = uracil(out). The enzyme catalyses adenine(out) = adenine(in). It catalyses the reaction 3-hydroxybutanoate(in) = 3-hydroxybutanoate(out). It carries out the reaction D-sorbitol(in) = D-sorbitol(out). The catalysed reaction is D-mannitol(in) = D-mannitol(out). The enzyme catalyses H2O2(out) = H2O2(in). It catalyses the reaction arsenite(in) = arsenite(out). It carries out the reaction selenite(in) = selenite(out). Channel activity is inhibited by mercury ions and phloretin. Aquaglyceroporins form homotetrameric transmembrane channels, with each monomer independently mediating glycerol and water transport across the plasma membrane along their osmotic gradient. AQP9 is the primary route for glycerol uptake in hepatocytes, supporting hepatic gluconeogenesis. It exhibits broad specificity and may transport various small, non-charged solutes, including carbamides, polyols, purines, and pyrimidines. AQP9 may also facilitate hepatic urea extrusion. Due to its permeability to lactate, AQP9 might participate in the astrocyte-to-neuron lactate shuttle, supplying neurons with energy. Additionally, AQP9 is permeable to arsenite, contributing to arsenic excretion by the liver and providing partial protection against arsenic toxicity. It is also permeable to H2O2 in vivo. Could also be permeable to ammonium. The protein is Aquaporin-9 of Rattus norvegicus (Rat).